Consider the following 488-residue polypeptide: NADH-ubiquinone oxidoreductase chain 4 (488 aa).

Transmembrane regions (helical) follow at residues 1–21 (MFLLLLLIPLIGIGFVTIEGN), 34–54 (SIALTTSIINLVVSLIMFILF), 79–99 (VDGLSIYFILLTTIIMPIAIL), 110–130 (VLSFVVIMLLLETLLLAVFLV), 134–154 (LLFYIFFESILPPLFLLIGLF), 164–184 (FYLFLYTLLGSLFMLLSIVAM), 207–227 (LFLFYGIFIAFAVKTPVSFLN), 238–258 (PLSGSIILAGIVLKLSLYGIF), 272–292 (YTYIIYVIGVITIIYASFSTL), 301–321 (IAYSSVSHAAVYSIGAFSNTI), 328–348 (IALGLAHGFVSSGLFICAGGI), 367–387 (VMPIFSVLFFILSLGNSGTPL), 407–427 (LLGVLASTSIVFSAAYTIFMY), and 452–472 (FIMLLVFVVLTVLFGIYPAPI).

Belongs to the complex I subunit 4 family.

The protein localises to the mitochondrion membrane. The enzyme catalyses a ubiquinone + NADH + 5 H(+)(in) = a ubiquinol + NAD(+) + 4 H(+)(out). Core subunit of the mitochondrial membrane respiratory chain NADH dehydrogenase (Complex I) that is believed to belong to the minimal assembly required for catalysis. Complex I functions in the transfer of electrons from NADH to the respiratory chain. The immediate electron acceptor for the enzyme is believed to be ubiquinone. This is NADH-ubiquinone oxidoreductase chain 4 (ND4) from Aspergillus amstelodami.